Reading from the N-terminus, the 556-residue chain is Dihydroxy-acid dehydratase (556 aa).

Residue Cys-47 coordinates [2Fe-2S] cluster. Residue Asp-79 coordinates Mg(2+). Residue Cys-120 coordinates [2Fe-2S] cluster. Mg(2+) is bound by residues Asp-121 and Lys-122. Lys-122 bears the N6-carboxylysine mark. Cys-192 contacts [2Fe-2S] cluster. Glu-444 provides a ligand contact to Mg(2+). Catalysis depends on Ser-470, which acts as the Proton acceptor.

The protein belongs to the IlvD/Edd family. As to quaternary structure, homodimer. [2Fe-2S] cluster serves as cofactor. Requires Mg(2+) as cofactor.

The catalysed reaction is (2R)-2,3-dihydroxy-3-methylbutanoate = 3-methyl-2-oxobutanoate + H2O. The enzyme catalyses (2R,3R)-2,3-dihydroxy-3-methylpentanoate = (S)-3-methyl-2-oxopentanoate + H2O. It functions in the pathway amino-acid biosynthesis; L-isoleucine biosynthesis; L-isoleucine from 2-oxobutanoate: step 3/4. The protein operates within amino-acid biosynthesis; L-valine biosynthesis; L-valine from pyruvate: step 3/4. Its function is as follows. Functions in the biosynthesis of branched-chain amino acids. Catalyzes the dehydration of (2R,3R)-2,3-dihydroxy-3-methylpentanoate (2,3-dihydroxy-3-methylvalerate) into 2-oxo-3-methylpentanoate (2-oxo-3-methylvalerate) and of (2R)-2,3-dihydroxy-3-methylbutanoate (2,3-dihydroxyisovalerate) into 2-oxo-3-methylbutanoate (2-oxoisovalerate), the penultimate precursor to L-isoleucine and L-valine, respectively. The chain is Dihydroxy-acid dehydratase from Prochlorococcus marinus (strain MIT 9211).